The chain runs to 382 residues: Gibberellin 2-beta-dioxygenase 1 (382 aa).

The Fe2OG dioxygenase domain occupies 189–321 (DSDCLLRINH…RLSTIYFASP (133 aa)). Tyr199 serves as a coordination point for 2-oxoglutarate. His241, Asp243, and His302 together coordinate Fe cation. Arg312 and Ser314 together coordinate 2-oxoglutarate.

Belongs to the iron/ascorbate-dependent oxidoreductase family. GA2OX subfamily. The cofactor is L-ascorbate. It depends on Fe(2+) as a cofactor. Expressed in roots, shoot apex, and in the basal region of leaf primordia and young leaves.

It carries out the reaction gibberellin A1 + 2-oxoglutarate + O2 = gibberellin A8 + succinate + CO2. Its function is as follows. Catalyzes the 2-beta-hydroxylation of several biologically active gibberellins, leading to the homeostatic regulation of their endogenous level. Catabolism of gibberellins (GAs) plays a central role in plant development. Controls the level of bioactive GAs in the shoot apical meristem, which regulates the vegetative to reproductive phase transition. In vitro, converts GA1, GA4, GA9, GA20, and GA44 to the corresponding 2-beta-hydroxylated products GA8, GA34, GA51, GA29, and GA98, respectively. This Oryza sativa subsp. japonica (Rice) protein is Gibberellin 2-beta-dioxygenase 1.